The following is a 177-amino-acid chain: MSRIGKKAVEIPSGVTAAIDGGQLSVKGPKGTLAMSLSDNIKYEVGDGSISVQPANDSREARAFWGMQRTLVQNLVTGVTEGFTKVLEITGVGYRANAQGKNLKLQLGYSHDVDFAVPDGIEIKTPDNTTIEISGIDKQQVGQVAAEIRRWRKPEPYKGKGIKYRGEYIFRKEGKKK.

Belongs to the universal ribosomal protein uL6 family. Part of the 50S ribosomal subunit.

Functionally, this protein binds to the 23S rRNA, and is important in its secondary structure. It is located near the subunit interface in the base of the L7/L12 stalk, and near the tRNA binding site of the peptidyltransferase center. In Sphingopyxis alaskensis (strain DSM 13593 / LMG 18877 / RB2256) (Sphingomonas alaskensis), this protein is Large ribosomal subunit protein uL6.